The following is a 305-amino-acid chain: tRNA dimethylallyltransferase (305 aa).

Gly-11–Thr-18 serves as a coordination point for ATP. Thr-13 to Thr-18 provides a ligand contact to substrate. Residues Asp-36–Gln-39 are interaction with substrate tRNA.

The protein belongs to the IPP transferase family. As to quaternary structure, monomer. Mg(2+) is required as a cofactor.

The catalysed reaction is adenosine(37) in tRNA + dimethylallyl diphosphate = N(6)-dimethylallyladenosine(37) in tRNA + diphosphate. Catalyzes the transfer of a dimethylallyl group onto the adenine at position 37 in tRNAs that read codons beginning with uridine, leading to the formation of N6-(dimethylallyl)adenosine (i(6)A). This chain is tRNA dimethylallyltransferase, found in Listeria monocytogenes serotype 4a (strain HCC23).